A 338-amino-acid polypeptide reads, in one-letter code: tRNA N6-adenosine threonylcarbamoyltransferase (338 aa).

The Fe cation site is built by H111 and H115. Substrate is bound by residues 134–138, D167, G180, and N272; that span reads LVSGG. D300 contributes to the Fe cation binding site.

This sequence belongs to the KAE1 / TsaD family. It depends on Fe(2+) as a cofactor.

The protein localises to the cytoplasm. The enzyme catalyses L-threonylcarbamoyladenylate + adenosine(37) in tRNA = N(6)-L-threonylcarbamoyladenosine(37) in tRNA + AMP + H(+). Functionally, required for the formation of a threonylcarbamoyl group on adenosine at position 37 (t(6)A37) in tRNAs that read codons beginning with adenine. Is involved in the transfer of the threonylcarbamoyl moiety of threonylcarbamoyl-AMP (TC-AMP) to the N6 group of A37, together with TsaE and TsaB. TsaD likely plays a direct catalytic role in this reaction. This chain is tRNA N6-adenosine threonylcarbamoyltransferase, found in Shewanella oneidensis (strain ATCC 700550 / JCM 31522 / CIP 106686 / LMG 19005 / NCIMB 14063 / MR-1).